Reading from the N-terminus, the 1042-residue chain is Disintegrin and metalloproteinase domain-containing protein unc-71 (1042 aa).

An N-terminal signal peptide occupies residues 1–23 (MICASKITMLGLLVMCTLGGVLG). Topologically, residues 24–746 (KVDIRQTTAN…NIGTTLETAT (723 aa)) are extracellular. N-linked (GlcNAc...) asparagine glycans are attached at residues N103 and N155. In terms of domain architecture, Peptidase M12B spans 227 to 431 (KYVEVALIAD…GNIQCLLNKP (205 aa)). 4 disulfide bridges follow: C338–C426, C378–C410, C380–C386, and C496–C516. A Disintegrin domain is found at 437–524 (LRECGNGVVD…DCPPDGHLID (88 aa)). N-linked (GlcNAc...) asparagine glycosylation occurs at N538. The EGF-like domain maps to 662 to 699 (SATACPTNNLALLCSGHGHCTTTARCVCFNGWSGVACD). Intrachain disulfides connect C666-C681, C675-C687, and C689-C698. N-linked (GlcNAc...) asparagine glycosylation is present at N703. Residues 747–767 (LFAILLGFGVFLLLCLVCLML) traverse the membrane as a helical segment. Residues 768-1042 (CYRRRSVVEI…KLEMTNSMHN (275 aa)) lie on the Cytoplasmic side of the membrane. Disordered stretches follow at residues 779-809 (KPSD…RKRK), 825-850 (DERD…RRNG), and 980-1028 (HDVG…PSLF). Residues 825–836 (DERDSTSLRSRD) show a composition bias toward basic and acidic residues. Residues 1002-1027 (DSPTLVNGASSSSTSNNYNFRQSPSL) show a composition bias toward polar residues.

The protein localises to the cell membrane. Functionally, involved in the migration of sex myoblasts (progenitors of egg-laying muscles), Q neuroblasts and BDU interneurons during development. Involved in axon branching and guidance of neurons including GABAergic type D motor neurons. Promotes sex myoblast migration and positioning independently of gonad attraction cues. May act downstream of mig-13 in order to promote the guidance, migration and positioning of Q neuroblasts and their descendants along the anteroposterior body axis. Required for coordinated movements. The chain is Disintegrin and metalloproteinase domain-containing protein unc-71 from Caenorhabditis elegans.